The primary structure comprises 260 residues: Triosephosphate isomerase (260 aa).

11-13 (NWK) contacts substrate. The Electrophile role is filled by histidine 103. The active-site Proton acceptor is glutamate 175. Residues glycine 181, serine 220, and 241–242 (GG) each bind substrate.

Belongs to the triosephosphate isomerase family. Homodimer.

The protein localises to the cytoplasm. The catalysed reaction is D-glyceraldehyde 3-phosphate = dihydroxyacetone phosphate. The protein operates within carbohydrate biosynthesis; gluconeogenesis. It participates in carbohydrate degradation; glycolysis; D-glyceraldehyde 3-phosphate from glycerone phosphate: step 1/1. Its function is as follows. Involved in the gluconeogenesis. Catalyzes stereospecifically the conversion of dihydroxyacetone phosphate (DHAP) to D-glyceraldehyde-3-phosphate (G3P). This Shewanella pealeana (strain ATCC 700345 / ANG-SQ1) protein is Triosephosphate isomerase.